A 375-amino-acid chain; its full sequence is Putative actin-26 (375 aa).

Belongs to the actin family.

Its subcellular location is the cytoplasm. It localises to the cytoskeleton. The catalysed reaction is ATP + H2O = ADP + phosphate + H(+). Functionally, actins are highly conserved proteins that are involved in various types of cell motility and are ubiquitously expressed in all eukaryotic cells. Multiple isoforms are involved in various cellular functions such as cytoskeleton structure, cell mobility, chromosome movement and muscle contraction. In Dictyostelium discoideum (Social amoeba), this protein is Putative actin-26 (act26).